The chain runs to 220 residues: Protein GrpE (220 aa).

Residues 1–22 form a disordered region; it reads MSDEKNKFTDASFENCDLKNPS.

It belongs to the GrpE family. In terms of assembly, homodimer.

The protein localises to the cytoplasm. Participates actively in the response to hyperosmotic and heat shock by preventing the aggregation of stress-denatured proteins, in association with DnaK and GrpE. It is the nucleotide exchange factor for DnaK and may function as a thermosensor. Unfolded proteins bind initially to DnaJ; upon interaction with the DnaJ-bound protein, DnaK hydrolyzes its bound ATP, resulting in the formation of a stable complex. GrpE releases ADP from DnaK; ATP binding to DnaK triggers the release of the substrate protein, thus completing the reaction cycle. Several rounds of ATP-dependent interactions between DnaJ, DnaK and GrpE are required for fully efficient folding. The protein is Protein GrpE of Bartonella henselae (strain ATCC 49882 / DSM 28221 / CCUG 30454 / Houston 1) (Rochalimaea henselae).